Here is a 537-residue protein sequence, read N- to C-terminus: Frizzled-4 (537 aa).

The first 36 residues, 1–36 (MAWRGAGPSVPGAPGGVGLSLGLLLQLLLLLGPARG), serve as a signal peptide directing secretion. Over 37-212 (FGDEEERRCD…KCGYDAGLYS (176 aa)) the chain is Extracellular. The region spanning 40–161 (EEERRCDPIR…NDHNHMCMEG (122 aa)) is the FZ domain. 8 disulfide bridges follow: Cys-45-Cys-106, Cys-53-Cys-99, Cys-90-Cys-128, Cys-117-Cys-158, Cys-121-Cys-145, Cys-181-Cys-200, Cys-204-Cys-282, and Cys-302-Cys-377. N-linked (GlcNAc...) asparagine glycosylation occurs at Asn-59. A glycan (N-linked (GlcNAc...) asparagine) is linked at Asn-144. Residues 213–243 (RSAKEFTDIWMAVWASLCFISTAFTVLTFLI) form a helical membrane-spanning segment. The Cytoplasmic portion of the chain corresponds to 244–249 (DSSRFS). A helical transmembrane segment spans residues 250-275 (YPERPIIFLSMCYNIYSIAYIVRLTV). The Extracellular portion of the chain corresponds to 276-299 (GRERISCDFEEAAEPVLIQEGLKN). The helical transmembrane segment at 300 to 333 (TGCAIIFLLMYFFGMASSIWWVILTLTWFLAAGL) threads the bilayer. Residues 334–336 (KWG) lie on the Cytoplasmic side of the membrane. Residues 337 to 365 (HEAIEMHSSYFHIAAWAIPAVKTIVILIM) form a helical membrane-spanning segment. Topologically, residues 366–383 (RLVDADELTGLCYVGNQN) are extracellular. The helical transmembrane segment at 384-418 (LDALTGFVVAPLFTYLVIGTLFIAAGLVALFKIRS) threads the bilayer. At 419–431 (NLQKDGTKTDKLE) the chain is on the cytoplasmic side. A helical membrane pass occupies residues 432–460 (RLMVKIGVFSVLYTVPATCVIACYFYEIS). Over 461–473 (NWALFRYSADDSN) the chain is Extracellular. A helical membrane pass occupies residues 474 to 495 (MAVEMLKIFMSLLVGITSGMWI). The Cytoplasmic segment spans residues 496–537 (WSAKTLHTWQKCSNRLVNSGKVKREKRGNGWVKPGKGSETVV). Residues 499–504 (KTLHTW) carry the Lys-Thr-X-X-X-Trp motif, mediates interaction with the PDZ domain of Dvl family members motif. The PDZ-binding signature appears at 535–537 (TVV).

It belongs to the G-protein coupled receptor Fz/Smo family. As to quaternary structure, interacts with MAGI3 and NDP. Component of a complex, at least composed of TSPAN12, FZD4 and norrin (NDP). Interacts (via FZ domain) with TSKU; TSKU competes with WNT2B for binding to FZD4, inhibiting Wnt signaling and repressing peripheral eye development. Interacts with glypican GPC3. In terms of processing, ubiquitinated by ZNRF3, leading to its degradation by the proteasome. In terms of tissue distribution, almost ubiquitous. Largely expressed in adult heart, skeletal muscle, ovary, and fetal kidney. Moderate amounts in adult liver, kidney, pancreas, spleen, and fetal lung, and small amounts in placenta, adult lung, prostate, testis, colon, fetal brain and liver.

The protein localises to the cell membrane. Functionally, receptor for Wnt proteins. Most frizzled receptors are coupled to the beta-catenin (CTNNB1) canonical signaling pathway, which leads to the activation of disheveled proteins, inhibition of GSK-3 kinase, nuclear accumulation of beta-catenin (CTNNB1) and activation of Wnt target genes. Plays a critical role in retinal vascularization by acting as a receptor for Wnt proteins and norrin (NDP). In retina, it can be activated by Wnt protein-binding and also by Wnt-independent signaling via binding of norrin (NDP), promoting in both cases beta-catenin (CTNNB1) accumulation and stimulation of LEF/TCF-mediated transcriptional programs. A second signaling pathway involving PKC and calcium fluxes has been seen for some family members, but it is not yet clear if it represents a distinct pathway or if it can be integrated in the canonical pathway, as PKC seems to be required for Wnt-mediated inactivation of GSK-3 kinase. Both pathways seem to involve interactions with G-proteins. May be involved in transduction and intercellular transmission of polarity information during tissue morphogenesis and/or in differentiated tissues. The polypeptide is Frizzled-4 (FZD4) (Homo sapiens (Human)).